The sequence spans 149 residues: Small ribosomal subunit protein uS9 (149 aa).

The protein belongs to the universal ribosomal protein uS9 family.

Its subcellular location is the cytoplasm. This chain is Small ribosomal subunit protein uS9 (RPS16A), found in Oryza sativa subsp. indica (Rice).